The following is a 212-amino-acid chain: MTMGLVGQKVGMTRIFDEEGTASAVTVIEIQPNIISQIKTDETDGYHAVQVSVGHRKSSRTTKALAGHFAKANISAAALVKEFRVDSEEIAKYEVGKPVELAIFEQGQRVDVRARSIGKGYAGTIKRHNFRGQRKTHGNSVSHRVPGSIGQNQTPGRVFKGKKMSGHMGNKMCSVQNIEIARIDVERNLLLLKGSVPGAKGGYVVIRPSVKA.

Positions 134-154 (RKTHGNSVSHRVPGSIGQNQT) are disordered. N5-methylglutamine is present on Gln-153.

This sequence belongs to the universal ribosomal protein uL3 family. As to quaternary structure, part of the 50S ribosomal subunit. Forms a cluster with proteins L14 and L19. In terms of processing, methylated by PrmB.

One of the primary rRNA binding proteins, it binds directly near the 3'-end of the 23S rRNA, where it nucleates assembly of the 50S subunit. The sequence is that of Large ribosomal subunit protein uL3 from Dichelobacter nodosus (strain VCS1703A).